Consider the following 285-residue polypeptide: Protease HtpX homolog (285 aa).

Helical transmembrane passes span 7 to 27 (TAML…MIGG) and 30 to 50 (GMTI…WFSD). His131 lines the Zn(2+) pocket. Residue Glu132 is part of the active site. Residue His135 coordinates Zn(2+). 2 helical membrane passes run 146 to 166 (ITAT…FFGG) and 177 to 197 (IAGI…QMAI). Glu202 provides a ligand contact to Zn(2+).

This sequence belongs to the peptidase M48B family. Requires Zn(2+) as cofactor.

It is found in the cell inner membrane. This chain is Protease HtpX homolog, found in Burkholderia cenocepacia (strain HI2424).